We begin with the raw amino-acid sequence, 312 residues long: Methionyl-tRNA formyltransferase (312 aa).

110–113 (SLLP) is a (6S)-5,6,7,8-tetrahydrofolate binding site.

The protein belongs to the Fmt family.

The enzyme catalyses L-methionyl-tRNA(fMet) + (6R)-10-formyltetrahydrofolate = N-formyl-L-methionyl-tRNA(fMet) + (6S)-5,6,7,8-tetrahydrofolate + H(+). Its function is as follows. Attaches a formyl group to the free amino group of methionyl-tRNA(fMet). The formyl group appears to play a dual role in the initiator identity of N-formylmethionyl-tRNA by promoting its recognition by IF2 and preventing the misappropriation of this tRNA by the elongation apparatus. The polypeptide is Methionyl-tRNA formyltransferase (Mycobacterium ulcerans (strain Agy99)).